The following is a 117-amino-acid chain: NADH-ubiquinone oxidoreductase chain 3 (117 aa).

Transmembrane regions (helical) follow at residues 1–21 (MLSL…LLLV), 56–76 (FFLV…ILPY), and 86–106 (TFYN…GLMY).

It belongs to the complex I subunit 3 family.

It localises to the mitochondrion membrane. The catalysed reaction is a ubiquinone + NADH + 5 H(+)(in) = a ubiquinol + NAD(+) + 4 H(+)(out). Its function is as follows. Core subunit of the mitochondrial membrane respiratory chain NADH dehydrogenase (Complex I) that is believed to belong to the minimal assembly required for catalysis. Complex I functions in the transfer of electrons from NADH to the respiratory chain. The immediate electron acceptor for the enzyme is believed to be ubiquinone. The chain is NADH-ubiquinone oxidoreductase chain 3 (ND3) from Branchiostoma lanceolatum (Common lancelet).